The primary structure comprises 305 residues: tRNA dimethylallyltransferase (305 aa).

An ATP-binding site is contributed by 13–20 (GPTSSGKT). 15-20 (TSSGKT) is a binding site for substrate. An interaction with substrate tRNA region spans residues 39–42 (DSKQ).

It belongs to the IPP transferase family. Monomer. The cofactor is Mg(2+).

The catalysed reaction is adenosine(37) in tRNA + dimethylallyl diphosphate = N(6)-dimethylallyladenosine(37) in tRNA + diphosphate. Functionally, catalyzes the transfer of a dimethylallyl group onto the adenine at position 37 in tRNAs that read codons beginning with uridine, leading to the formation of N6-(dimethylallyl)adenosine (i(6)A). The chain is tRNA dimethylallyltransferase from Neorickettsia sennetsu (strain ATCC VR-367 / Miyayama) (Ehrlichia sennetsu).